A 186-amino-acid polypeptide reads, in one-letter code: Ribosome maturation factor RimM (186 aa).

Residues 100–182 (NEGEYHVSDL…RIEINPPVGL (83 aa)) form the PRC barrel domain.

Belongs to the RimM family. As to quaternary structure, binds ribosomal protein uS19.

The protein localises to the cytoplasm. An accessory protein needed during the final step in the assembly of 30S ribosomal subunit, possibly for assembly of the head region. Essential for efficient processing of 16S rRNA. May be needed both before and after RbfA during the maturation of 16S rRNA. It has affinity for free ribosomal 30S subunits but not for 70S ribosomes. The protein is Ribosome maturation factor RimM of Rippkaea orientalis (strain PCC 8801 / RF-1) (Cyanothece sp. (strain PCC 8801)).